A 220-amino-acid chain; its full sequence is Large ribosomal subunit protein uL1 (220 aa).

It belongs to the universal ribosomal protein uL1 family. Part of the 50S ribosomal subunit.

In terms of biological role, binds directly to 23S rRNA. The L1 stalk is quite mobile in the ribosome, and is involved in E site tRNA release. Functionally, protein L1 is also a translational repressor protein, it controls the translation of the L11 operon by binding to its mRNA. The polypeptide is Large ribosomal subunit protein uL1 (Ehrlichia canis (strain Jake)).